Consider the following 394-residue polypeptide: T-cell acute lymphocytic leukemia protein 1 (394 aa).

The segment covering 1 to 17 (MSLKMMERLSTDMDGTR) has biased composition (basic and acidic residues). A disordered region spans residues 1-49 (MSLKMMERLSTDMDGTRDVASPPARQDAAEPERTVELSGVKEGAAPNSP). A run of 7 repeats spans residues 83-89 (TELCRAT), 94-100 (TELCRAP), 105-111 (TELCRAP), 116-122 (TELCRAP), 127-133 (TELCRPP), 149-155 (SELCRAP), and 167-173 (TELCRPP). The interval 83-173 (TELCRATLTP…TATTELCRPP (91 aa)) is 7 X 7 AA approximate repeats of [TS]-E-L-C-R-[AP]-P. The bHLH domain occupies 262 to 314 (VRRIFTNSRERWRQQNVNGAFAELRKLIPTHPPDKKLSKNEILRLAMKYINFL). The segment at 347–394 (LSPNSSCGSSLDGAPSPDSYSEEHDALDSKHSRNLHQAMLPIDGSGQR) is disordered. Over residues 367–377 (SEEHDALDSKH) the composition is skewed to basic and acidic residues.

In terms of tissue distribution, first expressed in patches on the ventral side of the embryo in a region that will give rise to hematopoietic tissue. By late neurula stages, expressed throughout the ventral blood island region. By tailbud stages, expression extends to probable vascular progenitor cells, but is excluded from the presumptive liver anlage. Also expressed in the central nervous system at the tailbud stage.

It localises to the nucleus. Its function is as follows. Transcription factor that acts synergistically with lmo2 and gata1 to specify embryonic dorsal mesoderm to a hematopoietic fate. The polypeptide is T-cell acute lymphocytic leukemia protein 1 (Xenopus laevis (African clawed frog)).